The chain runs to 441 residues: Nucleolar and spindle-associated protein 1 (441 aa).

2 disordered regions span residues 47–186 and 216–267; these read ARKG…PNFK and MNEL…LGLK. 2 stretches are compositionally biased toward polar residues: residues 56–74 and 100–116; these read ESQT…ISNQ and DSQQ…PTEF. Over residues 117 to 126 the composition is skewed to basic and acidic residues; it reads QNHEKQESQD. Ser124 is subject to Phosphoserine; by ATM. Ser135 carries the phosphoserine modification. A compositionally biased stretch (basic and acidic residues) spans 152 to 171; it reads RDSKVPSEGKKSLYTDESSK. Thr182 carries the post-translational modification Phosphothreonine. Residues 237-382 are interaction with microtubules; it reads GRLSVASTPI…HKGKLKPWGQ (146 aa). Ser240 is subject to Phosphoserine. Over residues 241-264 the composition is skewed to polar residues; that stretch reads VASTPISQRRSQGRSCGPASQSTL. Thr244 carries the post-translational modification Phosphothreonine. Residues Ser247, Ser255, Ser269, Ser276, and Ser311 each carry the phosphoserine modification. Positions 286 to 319 are disordered; sequence AATKDNEHKRSLTKTPARKSAHVTVSGGTPKGEA. Phosphothreonine occurs at positions 314, 338, and 349. A phosphoserine mark is found at Ser352 and Ser363. Positions 384–390 match the KEN box motif; it reads KENNYLN. Positions 401 to 427 are disordered; that stretch reads KTYKQPHLQTKEEQRKKREQERKEKKA. A coiled-coil region spans residues 407–432; it reads HLQTKEEQRKKREQERKEKKAKVLGM. Positions 409–424 are enriched in basic and acidic residues; it reads QTKEEQRKKREQERKE. An N6-acetyllysine modification is found at Lys411.

Belongs to the NUSAP family. Interacts with DNA and microtubules. Microtubule bundling is inhibited by IPO7, KPNA2 and KPNB1 while association with DNA is also inhibited by IPO7 and KPNA2. Post-translationally, ubiquitinated. Ubiquitination by FZR1 may lead to proteasome-dependent degradation of this protein. In terms of processing, phosphorylation by ATM in G2/M-phase induces mitotic arrest.

The protein localises to the cytoplasm. It localises to the nucleus. Its subcellular location is the nucleolus. It is found in the cytoskeleton. The protein resides in the spindle. The protein localises to the chromosome. In terms of biological role, microtubule-associated protein with the capacity to bundle and stabilize microtubules. May associate with chromosomes and promote the organization of mitotic spindle microtubules around them. In Homo sapiens (Human), this protein is Nucleolar and spindle-associated protein 1 (NUSAP1).